The chain runs to 422 residues: Glutamate-1-semialdehyde 2,1-aminomutase (422 aa).

An N6-(pyridoxal phosphate)lysine modification is found at Lys-265.

The protein belongs to the class-III pyridoxal-phosphate-dependent aminotransferase family. HemL subfamily. Requires pyridoxal 5'-phosphate as cofactor.

Its subcellular location is the cytoplasm. The catalysed reaction is (S)-4-amino-5-oxopentanoate = 5-aminolevulinate. Its pathway is porphyrin-containing compound metabolism; protoporphyrin-IX biosynthesis; 5-aminolevulinate from L-glutamyl-tRNA(Glu): step 2/2. This chain is Glutamate-1-semialdehyde 2,1-aminomutase, found in Methanococcoides burtonii (strain DSM 6242 / NBRC 107633 / OCM 468 / ACE-M).